The following is a 92-amino-acid chain: Small ribosomal subunit protein uS19 (92 aa).

It belongs to the universal ribosomal protein uS19 family.

Protein S19 forms a complex with S13 that binds strongly to the 16S ribosomal RNA. The sequence is that of Small ribosomal subunit protein uS19 from Aliivibrio fischeri (strain ATCC 700601 / ES114) (Vibrio fischeri).